Consider the following 98-residue polypeptide: NADH-ubiquinone oxidoreductase chain 4L (98 aa).

Transmembrane regions (helical) follow at residues Met-1–Ile-21, Ser-29–Leu-49, and Ile-61–Ile-81.

The protein belongs to the complex I subunit 4L family. As to quaternary structure, core subunit of respiratory chain NADH dehydrogenase (Complex I) which is composed of 45 different subunits.

It is found in the mitochondrion inner membrane. The enzyme catalyses a ubiquinone + NADH + 5 H(+)(in) = a ubiquinol + NAD(+) + 4 H(+)(out). Core subunit of the mitochondrial membrane respiratory chain NADH dehydrogenase (Complex I) which catalyzes electron transfer from NADH through the respiratory chain, using ubiquinone as an electron acceptor. Part of the enzyme membrane arm which is embedded in the lipid bilayer and involved in proton translocation. The chain is NADH-ubiquinone oxidoreductase chain 4L (MT-ND4L) from Aotus trivirgatus (Three-striped night monkey).